A 358-amino-acid polypeptide reads, in one-letter code: tRNA-specific 2-thiouridylase MnmA (358 aa).

ATP is bound by residues 6–13 and leucine 32; that span reads AMSGGVDS. The active-site Nucleophile is cysteine 101. A disulfide bridge links cysteine 101 with cysteine 193. Residue glycine 125 coordinates ATP. The segment at 143–145 is interaction with tRNA; the sequence is KDQ. The active-site Cysteine persulfide intermediate is cysteine 193.

The protein belongs to the MnmA/TRMU family.

The protein localises to the cytoplasm. It carries out the reaction S-sulfanyl-L-cysteinyl-[protein] + uridine(34) in tRNA + AH2 + ATP = 2-thiouridine(34) in tRNA + L-cysteinyl-[protein] + A + AMP + diphosphate + H(+). Its function is as follows. Catalyzes the 2-thiolation of uridine at the wobble position (U34) of tRNA, leading to the formation of s(2)U34. The protein is tRNA-specific 2-thiouridylase MnmA of Mycolicibacterium paratuberculosis (strain ATCC BAA-968 / K-10) (Mycobacterium paratuberculosis).